The primary structure comprises 247 residues: Probable transcriptional regulatory protein Spro_2779 (247 aa).

This sequence belongs to the TACO1 family.

Its subcellular location is the cytoplasm. This chain is Probable transcriptional regulatory protein Spro_2779, found in Serratia proteamaculans (strain 568).